Consider the following 160-residue polypeptide: Protein max (160 aa).

Positions 1–13 (MSDNDDIEVESDE) are enriched in acidic residues. The disordered stretch occupies residues 1–40 (MSDNDDIEVESDEEQPRFQSAADKRAHHNALERKRRDHIK). Serine 2 is modified (N-acetylserine). Residues serine 2 and serine 11 each carry the phosphoserine modification. Positions 23 to 74 (DKRAHHNALERKRRDHIKDSFHSLRDSVPSLQGEKASRAQILDKATEYIQYM) constitute a bHLH domain. Residues 29 to 40 (NALERKRRDHIK) show a composition bias toward basic and acidic residues. Lysine 66 carries the post-translational modification N6-acetyllysine. Residues 81–102 (HQQDIDDLKRQNALLEQQVRAL) form a leucine-zipper region. Residues 103-160 (EKARSSAQLQTNYPSSDNSLYTNAKGSTISAFDGGSDSSSESEPEEPQSRKKLRMEAS) form a disordered region. Serine 107 is subject to Phosphoserine. Residues 107 to 132 (SSAQLQTNYPSSDNSLYTNAKGSTIS) show a composition bias toward polar residues. The short motif at 152-156 (RKKLR) is the Nuclear localization signal element. 2 positions are modified to N6-acetyllysine: lysine 153 and lysine 154.

Belongs to the MAX family. Efficient DNA binding requires dimerization with another bHLH protein. Binds DNA as a heterodimer with MYC or MAD. Part of the E2F6.com-1 complex in G0 phase composed of E2F6, MGA, MAX, TFDP1, CBX3, BAT8, EUHMTASE1, RING1, RNF2, MBLR, L3MBTL2 and YAF2. Component of some MLL1/MLL complex, at least composed of the core components KMT2A/MLL1, ASH2L, HCFC1/HCF1, WDR5 and RBBP5, as well as the facultative components BACC1, CHD8, E2F6, HSP70, INO80C, KANSL1, LAS1L, MAX, MCRS1, MGA, MYST1/MOF, PELP1, PHF20, PRP31, RING2, RUVB1/TIP49A, RUVB2/TIP49B, SENP3, TAF1, TAF4, TAF6, TAF7, TAF9 and TEX10. Interacts with SPAG9. The heterodimer MYC:MAX interacts with ABI1; the interaction may enhance MYC:MAX transcriptional activity. Reversible lysine acetylation might regulate the nuclear-cytoplasmic shuttling of specific Max complexes. As to expression, high levels found in the brain, heart and lung while lower levels are seen in the liver, kidney and skeletal muscle.

The protein resides in the nucleus. It is found in the cell projection. The protein localises to the dendrite. In terms of biological role, transcription regulator. Forms a sequence-specific DNA-binding protein complex with MYC or MAD which recognizes the core sequence 5'-CAC[GA]TG-3'. The MYC:MAX complex is a transcriptional activator, whereas the MAD:MAX complex is a repressor. May repress transcription via the recruitment of a chromatin remodeling complex containing H3 'Lys-9' histone methyltransferase activity. Represses MYC transcriptional activity from E-box elements. The chain is Protein max from Homo sapiens (Human).